Reading from the N-terminus, the 206-residue chain is Large ribosomal subunit protein uL4 (206 aa).

It belongs to the universal ribosomal protein uL4 family. In terms of assembly, part of the 50S ribosomal subunit.

One of the primary rRNA binding proteins, this protein initially binds near the 5'-end of the 23S rRNA. It is important during the early stages of 50S assembly. It makes multiple contacts with different domains of the 23S rRNA in the assembled 50S subunit and ribosome. In terms of biological role, forms part of the polypeptide exit tunnel. The protein is Large ribosomal subunit protein uL4 of Rhodopseudomonas palustris (strain HaA2).